Reading from the N-terminus, the 289-residue chain is Protein shisa-2 homolog (289 aa).

The first 27 residues, 1–27, serve as a signal peptide directing secretion; the sequence is MWAGCHPDAASLLRLLLAALLAAGALA. The Extracellular portion of the chain corresponds to 28–104; it reads SGEYCHGWLD…RADKDGPDGS (77 aa). The interval 81 to 102 is disordered; the sequence is GCDNDRQQGAGEPGRADKDGPD. Residues 105–125 form a helical membrane-spanning segment; it reads AVPIYVPFLIVGSVFVAFIVL. Residues 126–289 are Cytoplasmic-facing; sequence GSLVAACCCR…EQKMYPAVTV (164 aa). Residues 162 to 198 form a disordered region; that stretch reads PSASTSRGSSSRQSSTAASSSSSANSGARAPPTRSQT. Residues 163-191 show a composition bias toward low complexity; it reads SASTSRGSSSRQSSTAASSSSSANSGARA.

Belongs to the shisa family.

The protein localises to the endoplasmic reticulum membrane. In terms of biological role, plays an essential role in the maturation of presomitic mesoderm cells by individual attenuation of both FGF and WNT signaling. This is Protein shisa-2 homolog (SHISA2) from Bos taurus (Bovine).